A 263-amino-acid chain; its full sequence is Undecaprenyl-diphosphatase 3 (263 aa).

A run of 8 helical transmembrane segments spans residues 15 to 37, 42 to 62, 83 to 103, 106 to 126, 142 to 162, 183 to 203, 216 to 236, and 242 to 262; these read GLTEFLPVSSTGHMILTGHLIGF, AKVFEVVIQLGSILAVVVIFW, LHIIIGMIPAGVLGVLFHSAI, VLFGPGPVVISLVAGGILMIV, ITYKQAFTIGMFQCLALWPGF, AEYTFILAVPMMVAASGLDLI, LFATGFITAFVVAMLAIVSFL, and VKLTPFAYYRFILAAVFYFFI.

Belongs to the UppP family.

The protein resides in the cell membrane. The enzyme catalyses di-trans,octa-cis-undecaprenyl diphosphate + H2O = di-trans,octa-cis-undecaprenyl phosphate + phosphate + H(+). Its function is as follows. Catalyzes the dephosphorylation of undecaprenyl diphosphate (UPP). Confers resistance to bacitracin. This is Undecaprenyl-diphosphatase 3 from Bacillus thuringiensis subsp. konkukian (strain 97-27).